Consider the following 879-residue polypeptide: DNA double-strand break repair Rad50 ATPase (879 aa).

ATP contacts are provided by residues 32-38 and glutamine 139; that span reads NGAGKSS. Coiled-coil stretches lie at residues 184–304 and 342–436; these read IELQ…NKIK and EIKG…NQVK. One can recognise a Zinc-hook domain in the interval 394-492; that stretch reads LQKLNEDLNN…LISELNQIIN (99 aa). 2 residues coordinate Zn(2+): cysteine 440 and cysteine 443. The stretch at 502 to 722 forms a coiled coil; sequence IRNLADYNNL…LITAYDKLKK (221 aa). 786 to 791 contacts ATP; it reads LLSGGE.

Belongs to the SMC family. RAD50 subfamily. As to quaternary structure, homodimer. Forms a heterotetramer composed of two Mre11 subunits and two Rad50 subunits. It depends on Zn(2+) as a cofactor.

Part of the Rad50/Mre11 complex, which is involved in the early steps of DNA double-strand break (DSB) repair. The complex may facilitate opening of the processed DNA ends to aid in the recruitment of HerA and NurA. Rad50 controls the balance between DNA end bridging and DNA resection via ATP-dependent structural rearrangements of the Rad50/Mre11 complex. This Sulfurisphaera tokodaii (strain DSM 16993 / JCM 10545 / NBRC 100140 / 7) (Sulfolobus tokodaii) protein is DNA double-strand break repair Rad50 ATPase.